The primary structure comprises 37 residues: Large ribosomal subunit protein bL36 (37 aa).

It belongs to the bacterial ribosomal protein bL36 family.

The protein is Large ribosomal subunit protein bL36 of Janthinobacterium sp. (strain Marseille) (Minibacterium massiliensis).